The chain runs to 359 residues: Chorismate synthase (359 aa).

NADP(+) contacts are provided by R48 and R54. FMN contacts are provided by residues 129–131 (RSS), 241–242 (NA), G285, 300–304 (KPTSS), and R326.

The protein belongs to the chorismate synthase family. In terms of assembly, homotetramer. FMNH2 serves as cofactor.

The catalysed reaction is 5-O-(1-carboxyvinyl)-3-phosphoshikimate = chorismate + phosphate. Its pathway is metabolic intermediate biosynthesis; chorismate biosynthesis; chorismate from D-erythrose 4-phosphate and phosphoenolpyruvate: step 7/7. In terms of biological role, catalyzes the anti-1,4-elimination of the C-3 phosphate and the C-6 proR hydrogen from 5-enolpyruvylshikimate-3-phosphate (EPSP) to yield chorismate, which is the branch point compound that serves as the starting substrate for the three terminal pathways of aromatic amino acid biosynthesis. This reaction introduces a second double bond into the aromatic ring system. The protein is Chorismate synthase of Afipia carboxidovorans (strain ATCC 49405 / DSM 1227 / KCTC 32145 / OM5) (Oligotropha carboxidovorans).